The chain runs to 216 residues: MTQDSRFPNLFILDHPLIQHKLSHMRDRDTSTRTFRELLREITLLMGYEITRNLPMTTRRVSTPLVDIDAPVIAGKKLAIVPVLRAGVGMSDGLLELIPSARVGHIGVYRDDDHRPVEYLVRLPDLEDRIFILCDPMVATGYSAVHAIDVLKRRGVAGENISFLALVAAPEGVQVFQDAHPDVKLYVASLDSHLNEHAYIIPGLGDAGDRLFGTKN.

Residues Arg-85, Arg-110, and 135-143 contribute to the 5-phospho-alpha-D-ribose 1-diphosphate site; that span reads DPMVATGYS. Uracil-binding positions include Ile-200 and 205 to 207; that span reads GDA. Residue Asp-206 coordinates 5-phospho-alpha-D-ribose 1-diphosphate.

This sequence belongs to the UPRTase family. Requires Mg(2+) as cofactor.

The enzyme catalyses UMP + diphosphate = 5-phospho-alpha-D-ribose 1-diphosphate + uracil. Its pathway is pyrimidine metabolism; UMP biosynthesis via salvage pathway; UMP from uracil: step 1/1. With respect to regulation, allosterically activated by GTP. Catalyzes the conversion of uracil and 5-phospho-alpha-D-ribose 1-diphosphate (PRPP) to UMP and diphosphate. The chain is Uracil phosphoribosyltransferase from Paraburkholderia phymatum (strain DSM 17167 / CIP 108236 / LMG 21445 / STM815) (Burkholderia phymatum).